Reading from the N-terminus, the 79-residue chain is Sulfur carrier protein TusA (79 aa).

C16 (cysteine persulfide intermediate) is an active-site residue.

This sequence belongs to the sulfur carrier protein TusA family.

It is found in the cytoplasm. Sulfur carrier protein which probably makes part of a sulfur-relay system. This is Sulfur carrier protein TusA from Pseudomonas aeruginosa (strain LESB58).